Here is a 302-residue protein sequence, read N- to C-terminus: Putative gluconeogenesis factor (302 aa).

It belongs to the gluconeogenesis factor family.

Its subcellular location is the cytoplasm. Functionally, required for morphogenesis under gluconeogenic growth conditions. This Salmonella typhi protein is Putative gluconeogenesis factor (ybhK).